Reading from the N-terminus, the 98-residue chain is uncharacterized protein (98 aa).

This sequence belongs to the CFAP97 family.

This is an uncharacterized protein from Homo sapiens (Human).